The following is a 367-amino-acid chain: Chorismate synthase (367 aa).

Arg-48 lines the NADP(+) pocket. Residues 125-127, 243-244, Gly-283, 298-302, and Arg-324 contribute to the FMN site; these read RSS, NA, and KPTSS.

The protein belongs to the chorismate synthase family. In terms of assembly, homotetramer. FMNH2 is required as a cofactor.

It carries out the reaction 5-O-(1-carboxyvinyl)-3-phosphoshikimate = chorismate + phosphate. The protein operates within metabolic intermediate biosynthesis; chorismate biosynthesis; chorismate from D-erythrose 4-phosphate and phosphoenolpyruvate: step 7/7. Catalyzes the anti-1,4-elimination of the C-3 phosphate and the C-6 proR hydrogen from 5-enolpyruvylshikimate-3-phosphate (EPSP) to yield chorismate, which is the branch point compound that serves as the starting substrate for the three terminal pathways of aromatic amino acid biosynthesis. This reaction introduces a second double bond into the aromatic ring system. The chain is Chorismate synthase from Psychrobacter arcticus (strain DSM 17307 / VKM B-2377 / 273-4).